The sequence spans 357 residues: 4-hydroxy-3-methylbut-2-en-1-yl diphosphate synthase (flavodoxin) (357 aa).

The [4Fe-4S] cluster site is built by cysteine 265, cysteine 268, cysteine 300, and glutamate 307.

Belongs to the IspG family. As to quaternary structure, homodimer. Requires [4Fe-4S] cluster as cofactor.

The enzyme catalyses (2E)-4-hydroxy-3-methylbut-2-enyl diphosphate + oxidized [flavodoxin] + H2O + 2 H(+) = 2-C-methyl-D-erythritol 2,4-cyclic diphosphate + reduced [flavodoxin]. It functions in the pathway isoprenoid biosynthesis; isopentenyl diphosphate biosynthesis via DXP pathway; isopentenyl diphosphate from 1-deoxy-D-xylulose 5-phosphate: step 5/6. Converts 2C-methyl-D-erythritol 2,4-cyclodiphosphate (ME-2,4cPP) into 1-hydroxy-2-methyl-2-(E)-butenyl 4-diphosphate. The polypeptide is 4-hydroxy-3-methylbut-2-en-1-yl diphosphate synthase (flavodoxin) (Aquifex aeolicus (strain VF5)).